Consider the following 237-residue polypeptide: Cysteine-rich venom protein DIS2 (237 aa).

Positions 1–18 (MFVFILLSLAAVLQQSFG) are cleaved as a signal peptide. The region spanning 37–165 (VDKHNAFRRS…SYNYFYVCQY (129 aa)) is the SCP domain. Cystine bridges form between C74–C152, C91–C166, C147–C163, C185–C192, C188–C197, C201–C234, and C219–C232. The ShKT domain occupies 201–234 (CSREDVFMNCKSLVAQSNCQDDYIRKNCPATCFC).

This sequence belongs to the CRISP family. As to expression, expressed by the venom gland.

The protein localises to the secreted. In terms of biological role, weakly blocks contraction of smooth muscle elicited by high potassium-induced depolarization, but does not block caffeine-stimulated contraction. May target voltage-gated calcium channels on smooth muscle. This chain is Cysteine-rich venom protein DIS2, found in Dispholidus typus (Boomslang).